The sequence spans 318 residues: Homoserine kinase (318 aa).

97–107 (PIGSGLGSSAC) is an ATP binding site.

The protein belongs to the GHMP kinase family. Homoserine kinase subfamily.

The protein resides in the cytoplasm. The enzyme catalyses L-homoserine + ATP = O-phospho-L-homoserine + ADP + H(+). It functions in the pathway amino-acid biosynthesis; L-threonine biosynthesis; L-threonine from L-aspartate: step 4/5. Its function is as follows. Catalyzes the ATP-dependent phosphorylation of L-homoserine to L-homoserine phosphate. In Vibrio atlanticus (strain LGP32) (Vibrio splendidus (strain Mel32)), this protein is Homoserine kinase.